Consider the following 450-residue polypeptide: Probable glycine dehydrogenase (decarboxylating) subunit 1 (450 aa).

It belongs to the GcvP family. N-terminal subunit subfamily. In terms of assembly, the glycine cleavage system is composed of four proteins: P, T, L and H. In this organism, the P 'protein' is a heterodimer of two subunits.

The enzyme catalyses N(6)-[(R)-lipoyl]-L-lysyl-[glycine-cleavage complex H protein] + glycine + H(+) = N(6)-[(R)-S(8)-aminomethyldihydrolipoyl]-L-lysyl-[glycine-cleavage complex H protein] + CO2. Its function is as follows. The glycine cleavage system catalyzes the degradation of glycine. The P protein binds the alpha-amino group of glycine through its pyridoxal phosphate cofactor; CO(2) is released and the remaining methylamine moiety is then transferred to the lipoamide cofactor of the H protein. This is Probable glycine dehydrogenase (decarboxylating) subunit 1 from Staphylococcus haemolyticus (strain JCSC1435).